Consider the following 366-residue polypeptide: Agamous-like MADS-box protein AGL36 (366 aa).

The 59-residue stretch at 1–59 folds into the MADS-box domain; the sequence is MKKVKLSLIANERSRKTSFIKRKDGIFKKLHELSTLCGVQACALIYSPFIPVPESWPSR. Residues 86 to 115 are a coiled coil; sequence TYLMERITKAKEQLKNLAAENRELQVRRFM.

Interacts with AGL62.

The protein localises to the nucleus. Probable transcription factor. This is Agamous-like MADS-box protein AGL36 (AGL36) from Arabidopsis thaliana (Mouse-ear cress).